The sequence spans 95 residues: Aspartyl/glutamyl-tRNA(Asn/Gln) amidotransferase subunit C (95 aa).

This sequence belongs to the GatC family. As to quaternary structure, heterotrimer of A, B and C subunits.

The enzyme catalyses L-glutamyl-tRNA(Gln) + L-glutamine + ATP + H2O = L-glutaminyl-tRNA(Gln) + L-glutamate + ADP + phosphate + H(+). The catalysed reaction is L-aspartyl-tRNA(Asn) + L-glutamine + ATP + H2O = L-asparaginyl-tRNA(Asn) + L-glutamate + ADP + phosphate + 2 H(+). Functionally, allows the formation of correctly charged Asn-tRNA(Asn) or Gln-tRNA(Gln) through the transamidation of misacylated Asp-tRNA(Asn) or Glu-tRNA(Gln) in organisms which lack either or both of asparaginyl-tRNA or glutaminyl-tRNA synthetases. The reaction takes place in the presence of glutamine and ATP through an activated phospho-Asp-tRNA(Asn) or phospho-Glu-tRNA(Gln). This Brucella abortus (strain S19) protein is Aspartyl/glutamyl-tRNA(Asn/Gln) amidotransferase subunit C.